Here is a 577-residue protein sequence, read N- to C-terminus: Adenine deaminase (577 aa).

This sequence belongs to the metallo-dependent hydrolases superfamily. Adenine deaminase family. Mn(2+) serves as cofactor.

The enzyme catalyses adenine + H2O + H(+) = hypoxanthine + NH4(+). The sequence is that of Adenine deaminase from Bacillus velezensis (strain DSM 23117 / BGSC 10A6 / LMG 26770 / FZB42) (Bacillus amyloliquefaciens subsp. plantarum).